A 240-amino-acid chain; its full sequence is Octanoyltransferase (240 aa).

A BPL/LPL catalytic domain is found at 31-216 (GQVGDTLLLL…HLCAVFDLEP (186 aa)). Residues 76 to 83 (RGGGATYH), 145 to 147 (AIG), and 159 to 161 (GLA) each bind substrate. Cysteine 177 functions as the Acyl-thioester intermediate in the catalytic mechanism.

This sequence belongs to the LipB family.

The protein resides in the cytoplasm. It carries out the reaction octanoyl-[ACP] + L-lysyl-[protein] = N(6)-octanoyl-L-lysyl-[protein] + holo-[ACP] + H(+). Its pathway is protein modification; protein lipoylation via endogenous pathway; protein N(6)-(lipoyl)lysine from octanoyl-[acyl-carrier-protein]: step 1/2. Its function is as follows. Catalyzes the transfer of endogenously produced octanoic acid from octanoyl-acyl-carrier-protein onto the lipoyl domains of lipoate-dependent enzymes. Lipoyl-ACP can also act as a substrate although octanoyl-ACP is likely to be the physiological substrate. The chain is Octanoyltransferase from Roseiflexus sp. (strain RS-1).